Reading from the N-terminus, the 128-residue chain is Cytochrome c-type biogenesis protein CcmE (128 aa).

At 1-8 the chain is on the cytoplasmic side; sequence MQKIVRNR. A helical; Signal-anchor for type II membrane protein membrane pass occupies residues 9–29; sequence LIKIIICFCSACLGISIILYN. Over 30–128 the chain is Periplasmic; that stretch reads LEKNIIFFFP…KHDENYRPPS (99 aa). Heme-binding residues include H120 and Y124.

The protein belongs to the CcmE/CycJ family.

It is found in the cell inner membrane. Its function is as follows. Heme chaperone required for the biogenesis of c-type cytochromes. Transiently binds heme delivered by CcmC and transfers the heme to apo-cytochromes in a process facilitated by CcmF and CcmH. The sequence is that of Cytochrome c-type biogenesis protein CcmE from Rickettsia prowazekii (strain Madrid E).